The following is a 185-amino-acid chain: MLQEVYAQTKEHMEKSIEALKKDYKSLRTGKVNTNILDGIKVDYYGTMTDLSQVGSVLATDATTITINPWEKNLLGTIEKAIQNANIGVNPNNDGQIIKLFFPPMTVEQRQETAKHAKTMTDNAKVAIRNIRQNSNNKVKTLLKDKAITEDESKKAQDEIQKITDSYVLKADETLKAKEKEILTV.

Belongs to the RRF family.

It is found in the cytoplasm. Functionally, responsible for the release of ribosomes from messenger RNA at the termination of protein biosynthesis. May increase the efficiency of translation by recycling ribosomes from one round of translation to another. The protein is Ribosome-recycling factor of Aliarcobacter butzleri (strain RM4018) (Arcobacter butzleri).